A 156-amino-acid polypeptide reads, in one-letter code: Arginine repressor (156 aa).

This sequence belongs to the ArgR family.

It is found in the cytoplasm. It participates in amino-acid biosynthesis; L-arginine biosynthesis [regulation]. Regulates arginine biosynthesis genes. The chain is Arginine repressor from Enterobacter sp. (strain 638).